The primary structure comprises 294 residues: 4-hydroxy-tetrahydrodipicolinate synthase (294 aa).

T47 is a binding site for pyruvate. Y135 serves as the catalytic Proton donor/acceptor. The Schiff-base intermediate with substrate role is filled by K163. Residue T205 participates in pyruvate binding.

It belongs to the DapA family. Homotetramer; dimer of dimers.

The protein resides in the cytoplasm. It carries out the reaction L-aspartate 4-semialdehyde + pyruvate = (2S,4S)-4-hydroxy-2,3,4,5-tetrahydrodipicolinate + H2O + H(+). Its pathway is amino-acid biosynthesis; L-lysine biosynthesis via DAP pathway; (S)-tetrahydrodipicolinate from L-aspartate: step 3/4. Catalyzes the condensation of (S)-aspartate-beta-semialdehyde [(S)-ASA] and pyruvate to 4-hydroxy-tetrahydrodipicolinate (HTPA). This is 4-hydroxy-tetrahydrodipicolinate synthase from Rickettsia africae (strain ESF-5).